The primary structure comprises 364 residues: Aminomethyltransferase (364 aa).

It belongs to the GcvT family. As to quaternary structure, the glycine cleavage system is composed of four proteins: P, T, L and H.

The catalysed reaction is N(6)-[(R)-S(8)-aminomethyldihydrolipoyl]-L-lysyl-[protein] + (6S)-5,6,7,8-tetrahydrofolate = N(6)-[(R)-dihydrolipoyl]-L-lysyl-[protein] + (6R)-5,10-methylene-5,6,7,8-tetrahydrofolate + NH4(+). In terms of biological role, the glycine cleavage system catalyzes the degradation of glycine. The chain is Aminomethyltransferase from Escherichia coli O157:H7.